The chain runs to 128 residues: Protein SOB FIVE-LIKE 3 (128 aa).

Disordered regions lie at residues 1 to 26 and 54 to 128; these read MERE…EEEE and KDSD…HKKK. Over residues 8 to 18 the composition is skewed to polar residues; sequence SSESGWTTYIS. The short motif at 11 to 16 is the SOFL-A element; that stretch reads SGWTTY. The short motif at 59 to 68 is the SOFL-B element; the sequence is SMASDASSGP. Positions 80 to 104 are enriched in basic and acidic residues; the sequence is REGLALRNGKGESNDVYSHRIDDKN. The Nuclear localization signal signature appears at 111–118; sequence RKKEKKKS.

The protein belongs to the SOFL plant protein family. In terms of tissue distribution, expressed in seedlings, roots, flowers and siliques.

The protein resides in the cytoplasm. Its subcellular location is the nucleus. Functionally, involved in cytokinin-mediated development. The protein is Protein SOB FIVE-LIKE 3 of Arabidopsis thaliana (Mouse-ear cress).